Here is a 185-residue protein sequence, read N- to C-terminus: uncharacterized protein (185 aa).

This is an uncharacterized protein from Haemophilus influenzae (strain ATCC 51907 / DSM 11121 / KW20 / Rd).